Here is a 458-residue protein sequence, read N- to C-terminus: Protein unc-93 homolog A (458 aa).

The next 5 helical transmembrane spans lie at 8-28, 42-62, 69-89, 90-110, and 140-160; these read VLVV…LQNL, TLST…PILI, WTIV…FHAN, WYTL…LWSA, and IFFL…SLVF. An N-linked (GlcNAc...) asparagine glycan is attached at N190. 7 helical membrane-spanning segments follow: residues 202 to 222, 258 to 275, 286 to 306, 321 to 341, 345 to 365, 390 to 410, and 412 to 432; these read TLLG…AVFL, LCLL…QEFL, CALG…MTAL, AALY…FLLW, TNQL…DAVW, LGEA…CVST, and LYIL…VEYL.

It belongs to the unc-93 family.

The protein localises to the cell membrane. The sequence is that of Protein unc-93 homolog A (Unc93a) from Mus musculus (Mouse).